A 688-amino-acid polypeptide reads, in one-letter code: Potassium-transporting ATPase ATP-binding subunit (688 aa).

Transmembrane regions (helical) follow at residues 34–54, 62–82, 219–239, and 260–280; these read PVMFVVYLGSGLTTLIWLAIL, ALFTGSVALWLWFTVLFANFA, VALTILLVALTIVFLLATATL, and VLVALLVCLIPTTIGGLLSAI. The 4-aspartylphosphate intermediate role is filled by aspartate 313. ATP-binding positions include aspartate 350, glutamate 354, 383–390, and lysine 401; that span reads FSAQTRMS. Residues aspartate 524 and aspartate 528 each contribute to the Mg(2+) site. The next 3 membrane-spanning stretches (helical) occupy residues 594–614, 622–642, and 667–687; these read FAIIPAAFAATYPQLNALNVM, AILSAVIFNALIIVFLIPLAL, and GLLVPFVGIKLIDLVLAALIM.

Belongs to the cation transport ATPase (P-type) (TC 3.A.3) family. Type IA subfamily. The system is composed of three essential subunits: KdpA, KdpB and KdpC.

Its subcellular location is the cell inner membrane. The catalysed reaction is K(+)(out) + ATP + H2O = K(+)(in) + ADP + phosphate + H(+). Part of the high-affinity ATP-driven potassium transport (or Kdp) system, which catalyzes the hydrolysis of ATP coupled with the electrogenic transport of potassium into the cytoplasm. This subunit is responsible for energy coupling to the transport system and for the release of the potassium ions to the cytoplasm. In Yersinia enterocolitica serotype O:8 / biotype 1B (strain NCTC 13174 / 8081), this protein is Potassium-transporting ATPase ATP-binding subunit.